Reading from the N-terminus, the 28-residue chain is Basic phospholipase A2 homolog BmatTX-II (28 aa).

In terms of assembly, monomer. In terms of tissue distribution, expressed by the venom gland.

Its subcellular location is the secreted. In terms of biological role, snake venom phospholipase A2 homolog that lacks enzymatic activity. Shows high myotoxic activity, neutrophil activation (demonstrated by activation induction of IL-1beta production), and slight cytotoxicity against Jurkat (leukemia T) and SK-BR-3 (breast adenocarcinoma) tumor cell lines. A model of myotoxic mechanism has been proposed: an apo Lys49-PLA2 is activated by the entrance of a hydrophobic molecule (e.g. fatty acid) at the hydrophobic channel of the protein leading to a reorientation of a monomer. This reorientation causes a transition between 'inactive' to 'active' states, causing alignment of C-terminal and membrane-docking sites (MDoS) side-by-side and putting the membrane-disruption sites (MDiS) in the same plane, exposed to solvent and in a symmetric position for both monomers. The MDoS region stabilizes the toxin on membrane by the interaction of charged residues with phospholipid head groups. Subsequently, the MDiS region destabilizes the membrane with penetration of hydrophobic residues. This insertion causes a disorganization of the membrane, allowing an uncontrolled influx of ions (i.e. calcium and sodium), and eventually triggering irreversible intracellular alterations and cell death. This is Basic phospholipase A2 homolog BmatTX-II from Bothrops mattogrossensis (Pitviper).